We begin with the raw amino-acid sequence, 217 residues long: Nascent polypeptide-associated complex subunit alpha (217 aa).

Residues 1 to 45 (MPELTEIKSEAAPSTSAEAKPEDVRVEDDGSDSDSDGGMPGLEEA) form a disordered region. Residues 19 to 28 (AKPEDVRVED) show a composition bias toward basic and acidic residues. The region spanning 70-135 (SRGEKKARKI…AKIEDLSQQA (66 aa)) is the NAC-A/B domain. The segment at 154 to 177 (SVGATTSVAPIAEEDEEDVDDTGV) is disordered. Residues 165–176 (AEEDEEDVDDTG) are compositionally biased toward acidic residues. Positions 177-217 (VDEKDIELVITQANTTRAKAIKALKNNNNDIVNAIMELTML) constitute a UBA domain.

Belongs to the NAC-alpha family. In terms of assembly, part of the nascent polypeptide-associated complex (NAC), consisting of Nac-alpha and bicaudal (bic).

May promote appropriate targeting of ribosome-nascent polypeptide complexes. Required for correct localization of the osk/oskar protein to the posterior pole during embryonic development. The osk protein directs the recruitment of molecules responsible for posterior body patterning and germline formation in the embryo. In Drosophila melanogaster (Fruit fly), this protein is Nascent polypeptide-associated complex subunit alpha (Nacalpha).